The sequence spans 270 residues: A-type potassium channel modulatory protein KCNIP2 (270 aa).

A compositionally biased stretch (basic and acidic residues) spans 1–17 (MRGQGRKESLSDSRDLD). Residues 1-32 (MRGQGRKESLSDSRDLDGSYDQLTGHPPGPTK) are disordered. The residue at position 9 (serine 9) is a Phosphoserine. 2 S-palmitoyl cysteine lipidation sites follow: cysteine 45 and cysteine 46. Positions 81 to 137 (FELSTVCHRPEGLEQLQEQTKFTRKELQVLYRGFKNECPSGIVNEENFKQIYSQFFP) constitute an EF-hand 1; degenerate domain. EF-hand domains are found at residues 140–175 (DSSTYATFLFNAFDTNHDGSVSFEDFVAGLSVILRG), 176–211 (TVDDRLNWAFNLYDLNKDGCITKEEMLDIMKSIYDM), and 224–259 (APREHVESFFQKMDRNKDGVVTIEEFIESCQKDENI). Residues aspartate 153, asparagine 155, aspartate 157, serine 159, aspartate 164, aspartate 189, asparagine 191, aspartate 193, cysteine 195, glutamate 200, aspartate 237, asparagine 239, aspartate 241, and glutamate 248 each contribute to the Ca(2+) site. Residues 257-270 (ENIMRSMQLFDNVI) form an interaction with KCND2 region.

This sequence belongs to the recoverin family. Component of heteromultimeric potassium channels. Identified in potassium channel complexes containing KCND1, KCND2, KCND3, KCNIP1, KCNIP2, KCNIP3, KCNIP4, DPP6 and DPP10. The KCND2-KCNIP2 channel complex contains four KCND2 and four KCNIP2 subunits. Interacts with KCND2. Probably part of a complex consisting of KCNIP1, KCNIP2 isoform 3 and KCND2. At least isoform 2 and isoform 3 can self-associate to form homodimers and homotetramers. Isoform 3 interacts with KCNIP1 in a calcium-dependent manner. Interacts with KCND3; each KCNIP2 monomer interacts with two adjacent KCND3 subunits, through both the N-terminal inactivation ball of a KCND3 subunit and a C-terminal helix from the adjacent KCND3 subunit, clamping them together; this interaction modulates the channel gating kinetics. In terms of processing, palmitoylated. Palmitoylation enhances association with the plasma membrane. In terms of tissue distribution, expressed in brain. Colocalizes with KCND2 in excitatory neurons including cortical and hippocampal CA1 pyramidal cells. Isoform 3 is expressed in heart and in umbilical vein endothelial cells. Not expressed in fetal heart.

The protein localises to the cell membrane. Its function is as follows. Regulatory subunit of Kv4/D (Shal)-type voltage-gated rapidly inactivating A-type potassium channels. Modulates channel density, inactivation kinetics and rate of recovery from inactivation in a calcium-dependent and isoform-specific manner. Involved in KCND2 and KCND3 trafficking to the cell surface. May be required for the expression of I(To) currents in the heart. The protein is A-type potassium channel modulatory protein KCNIP2 of Homo sapiens (Human).